We begin with the raw amino-acid sequence, 297 residues long: Lipoyl synthase (297 aa).

[4Fe-4S] cluster is bound by residues Cys-37, Cys-42, Cys-48, Cys-63, Cys-67, Cys-70, and Ser-276. The 217-residue stretch at Trp-49–Leu-265 folds into the Radical SAM core domain.

It belongs to the radical SAM superfamily. Lipoyl synthase family. It depends on [4Fe-4S] cluster as a cofactor.

It is found in the cytoplasm. The enzyme catalyses [[Fe-S] cluster scaffold protein carrying a second [4Fe-4S](2+) cluster] + N(6)-octanoyl-L-lysyl-[protein] + 2 oxidized [2Fe-2S]-[ferredoxin] + 2 S-adenosyl-L-methionine + 4 H(+) = [[Fe-S] cluster scaffold protein] + N(6)-[(R)-dihydrolipoyl]-L-lysyl-[protein] + 4 Fe(3+) + 2 hydrogen sulfide + 2 5'-deoxyadenosine + 2 L-methionine + 2 reduced [2Fe-2S]-[ferredoxin]. It participates in protein modification; protein lipoylation via endogenous pathway; protein N(6)-(lipoyl)lysine from octanoyl-[acyl-carrier-protein]: step 2/2. Its function is as follows. Catalyzes the radical-mediated insertion of two sulfur atoms into the C-6 and C-8 positions of the octanoyl moiety bound to the lipoyl domains of lipoate-dependent enzymes, thereby converting the octanoylated domains into lipoylated derivatives. This is Lipoyl synthase from Rickettsia prowazekii (strain Madrid E).